We begin with the raw amino-acid sequence, 398 residues long: NADH-quinone oxidoreductase subunit D (398 aa).

It belongs to the complex I 49 kDa subunit family. In terms of assembly, NDH-1 is composed of 14 different subunits. Subunits NuoB, C, D, E, F, and G constitute the peripheral sector of the complex.

It localises to the cell inner membrane. The catalysed reaction is a quinone + NADH + 5 H(+)(in) = a quinol + NAD(+) + 4 H(+)(out). Its function is as follows. NDH-1 shuttles electrons from NADH, via FMN and iron-sulfur (Fe-S) centers, to quinones in the respiratory chain. The immediate electron acceptor for the enzyme in this species is believed to be ubiquinone. Couples the redox reaction to proton translocation (for every two electrons transferred, four hydrogen ions are translocated across the cytoplasmic membrane), and thus conserves the redox energy in a proton gradient. The sequence is that of NADH-quinone oxidoreductase subunit D from Bradyrhizobium sp. (strain ORS 278).